We begin with the raw amino-acid sequence, 292 residues long: Protein/nucleic acid deglycase HchA (292 aa).

Residues 1–12 (MSQDVNKLSKQP) show a composition bias toward polar residues. The disordered stretch occupies residues 1–23 (MSQDVNKLSKQPTPDKAEDNAFF). Cysteine 190 (nucleophile) is an active-site residue.

The protein belongs to the peptidase C56 family. HchA subfamily.

The protein localises to the cytoplasm. The enzyme catalyses N(omega)-(1-hydroxy-2-oxopropyl)-L-arginyl-[protein] + H2O = lactate + L-arginyl-[protein] + H(+). It catalyses the reaction N(6)-(1-hydroxy-2-oxopropyl)-L-lysyl-[protein] + H2O = lactate + L-lysyl-[protein] + H(+). The catalysed reaction is S-(1-hydroxy-2-oxopropyl)-L-cysteinyl-[protein] + H2O = lactate + L-cysteinyl-[protein] + H(+). It carries out the reaction N(omega)-(1-hydroxy-2-oxoethyl)-L-arginyl-[protein] + H2O = L-arginyl-[protein] + glycolate + H(+). The enzyme catalyses N(6)-(1-hydroxy-2-oxoethyl)-L-lysyl-[protein] + H2O = glycolate + L-lysyl-[protein] + H(+). It catalyses the reaction S-(1-hydroxy-2-oxoethyl)-L-cysteinyl-[protein] + H2O = glycolate + L-cysteinyl-[protein] + H(+). The catalysed reaction is N(2)-(1-hydroxy-2-oxopropyl)-dGTP + H2O = lactate + dGTP + H(+). It carries out the reaction N(2)-(1-hydroxy-2-oxopropyl)-GTP + H2O = lactate + GTP + H(+). The enzyme catalyses N(2)-(1-hydroxy-2-oxopropyl)-GDP + H2O = lactate + GDP + H(+). It catalyses the reaction N(2)-(1-hydroxy-2-oxopropyl)-GMP + H2O = lactate + GMP + H(+). The catalysed reaction is N(2)-(1-hydroxy-2-oxoethyl)-dGTP + H2O = dGTP + glycolate + H(+). It carries out the reaction N(2)-(1-hydroxy-2-oxoethyl)-GTP + H2O = glycolate + GTP + H(+). The enzyme catalyses N(2)-(1-hydroxy-2-oxoethyl)-GDP + H2O = glycolate + GDP + H(+). It catalyses the reaction N(2)-(1-hydroxy-2-oxoethyl)-GMP + H2O = glycolate + GMP + H(+). The catalysed reaction is an N(2)-(1-hydroxy-2-oxopropyl)-guanosine in RNA + H2O = a guanosine in RNA + lactate + H(+). It carries out the reaction an N(2)-(1-hydroxy-2-oxopropyl)-2'-deoxyguanosine in DNA + H2O = a 2'-deoxyguanosine in DNA + lactate + H(+). The enzyme catalyses an N(2)-(1-hydroxy-2-oxoethyl)-guanosine in RNA + H2O = a guanosine in RNA + glycolate + H(+). It catalyses the reaction an N(2)-(1-hydroxy-2-oxoethyl)-2'-deoxyguanosine in DNA + H2O = a 2'-deoxyguanosine in DNA + glycolate + H(+). In terms of biological role, protein and nucleotide deglycase that catalyzes the deglycation of the Maillard adducts formed between amino groups of proteins or nucleotides and reactive carbonyl groups of glyoxals. Thus, functions as a protein deglycase that repairs methylglyoxal- and glyoxal-glycated proteins, and releases repaired proteins and lactate or glycolate, respectively. Deglycates cysteine, arginine and lysine residues in proteins, and thus reactivates these proteins by reversing glycation by glyoxals. Acts on early glycation intermediates (hemithioacetals and aminocarbinols), preventing the formation of Schiff bases and advanced glycation endproducts (AGE). Also functions as a nucleotide deglycase able to repair glycated guanine in the free nucleotide pool (GTP, GDP, GMP, dGTP) and in DNA and RNA. Is thus involved in a major nucleotide repair system named guanine glycation repair (GG repair), dedicated to reversing methylglyoxal and glyoxal damage via nucleotide sanitization and direct nucleic acid repair. Plays an important role in protecting cells from carbonyl stress. The sequence is that of Protein/nucleic acid deglycase HchA from Staphylococcus aureus (strain MRSA252).